The sequence spans 730 residues: MWVTKLLPLLVLQQLLLHLLLLPVAVPRAEGQKKRRNTLHEFKKSAKTTLIKEDPLLKIKTKKMNTADQCANRCIRNKGLPFTCKAFVFDKARKRCLWFPFNSMTSGVKKEFGHEFDLYENKDYIRNCIIGKGGSYKGTVSITKSGIKCQPWNSMIPHEHSFLPSSYRGKDLQENYCRNPRGEEGGPWCFTSNPEVRYEVCDIPQCSEVECMTCNGESYRGPMDHTESGKICQRWDHQTPHRHKFLPERYPDKGFDDNYCRNPDGKPRPWCYTLDPDTPWEYCAIKMCAHSTMNDTDVPMETTECIQGQGEGYRGTINTIWNGVPCQRWDSQYPHQHDITPENFKCKDLRENYCRNPDGAESPWCFTTDPNIRVGYCSQIPKCDVSSGQDCYRGNGKNYMGNLSKTRSGLTCSMWEKNMEDLHRHIFWEPDASKLNKNYCRNPDDDAHGPWCYTGNPLIPWDYCPIFRCEGDTTPTIVNLDHPVISCAKTKQLRVVNGIPTRTNVGWMVSLKYRNKHICGGSLIKESWILTARQCFPSRNRDLKDYEAWLGIHDVHGKGDEKRKQVLNVSQLVYGPEGSDLVLLKLARPAILDDFVSTIDLPNYGCTIPEKTTCSVYGWGYTGSINFDGLLRVAHLYIMGNEKCSQYHQGKVTLNESEICAGAENIVSGPCEGDYGGPLVCEQHKMRMVLGVIVPGRGCAIPNRPGIFVRVAYYAKWIHKIILTYKIQQS.

Residues 1–31 (MWVTKLLPLLVLQQLLLHLLLLPVAVPRAEG) form the signal peptide. Gln-32 is subject to Pyrrolidone carboxylic acid. Positions 37–123 (NTLHEFKKSA…HEFDLYENKD (87 aa)) constitute a PAN domain. Cystine bridges form between Cys-70/Cys-96, Cys-74/Cys-84, Cys-128/Cys-206, Cys-149/Cys-189, Cys-177/Cys-201, Cys-211/Cys-288, Cys-232/Cys-271, and Cys-260/Cys-283. Kringle domains are found at residues 128-206 (CIIG…IPQC) and 211-288 (CMTC…IKMC). Asn-294 is a glycosylation site (N-linked (GlcNAc...) asparagine). 11 disulfide bridges follow: Cys-305/Cys-383, Cys-326/Cys-365, Cys-354/Cys-377, Cys-391/Cys-469, Cys-412/Cys-452, Cys-440/Cys-464, Cys-487/Cys-606, Cys-519/Cys-535, Cys-614/Cys-681, Cys-644/Cys-660, and Cys-671/Cys-699. Kringle domains are found at residues 305–383 (CIQG…IPKC) and 391–469 (CYRG…IFRC). N-linked (GlcNAc...) asparagine glycosylation is present at Asn-402. The Peptidase S1 domain maps to 495–723 (VVNGIPTRTN…YAKWIHKIIL (229 aa)). N-linked (GlcNAc...) asparagine glycosylation is found at Asn-568 and Asn-655.

Belongs to the peptidase S1 family. Plasminogen subfamily. Dimer of an alpha chain and a beta chain linked by a disulfide bond. Interacts with SRPX2; the interaction increases HGF mitogenic activity. The single-chain precursor undergoes proteolytic processing by TMPRSS13 resulting in an active two-chain form. The single-chain precursor undergoes proteolytic processing by HGFAC resulting in an active two-chain form.

Functionally, potent mitogen for mature parenchymal hepatocyte cells, seems to be a hepatotrophic factor, and acts as a growth factor for a broad spectrum of tissues and cell types. Activating ligand for the receptor tyrosine kinase MET by binding to it and promoting its dimerization. Activates MAPK signaling following TMPRSS13 cleavage and activation. In Canis lupus familiaris (Dog), this protein is Hepatocyte growth factor (HGF).